The following is a 182-amino-acid chain: MLVLVLGDLHIPHRCNSLPAKFKKLLVPGKIQHILCTGNLCTKESYDYLKTLAGDVHIVRGDFDESLNYPEQKVVTVGQFKIGLIHGHQVIPWGDMASLALLQRQFDVDILISGHTHKFEAFEHENKFYINPGSATGAYNALETNIIPSFVLMDIQASTVVTYVYQLIGDDVKVERIEYKKS.

The residue at position 50 (Lys-50) is an N6-acetyllysine.

It belongs to the VPS29 family. As to quaternary structure, component of the commander complex consisting of the CCC subcomplex and the retriever subcomplex. Component of the heterotrimeric retriever complex formed by VPS26C, VPS29 and VPS35L; within the complex interacts with VPS35L. Component of the heterotrimeric retromer cargo-selective complex (CSC), also described as vacuolar protein sorting subcomplex (VPS), formed by VPS26 (VPS26A or VPS26B), VPS29 and VPS35. The CSC has a highly elongated structure with VPS26 and VPS29 binding independently at opposite distal ends of VPS35 as central platform. The CSC is believed to associate with variable sorting nexins to form functionally distinct retromer complex variants. The originally described retromer complex (also called SNX-BAR retromer) is a pentamer containing the CSC and a heterodimeric membrane-deforming subcomplex formed between SNX1 or SNX2 and SNX5 or SNX6 (also called SNX-BAR subcomplex); the respective CSC and SNX-BAR subcomplexes associate with low affinity. The CSC associates with SNX3 to form a SNX3-retromer complex. The CSC associates with SNX27, the WASH complex and the SNX-BAR subcomplex to form the SNX27-retromer complex. Interacts with VPS26A, VPS35, SNX1, SNX2, SNX3, SNX27, WASHC5. Interacts with TBC1D5; this interaction is blocked by VPS35L in the retriever complex. Interacts with SNX17; the interaction is indirect; SNX17 (via its C-terminus) interacts with the retriever complex (via VPS26C and VPS35L). Interacts with VPS26B and ANKRD27.

It is found in the cytoplasm. The protein localises to the membrane. Its subcellular location is the endosome membrane. It localises to the early endosome. The protein resides in the late endosome. Component of the commander complex that is essential for endosomal recycling of transmembrane cargos; the commander complex is composed of the CCC subcomplex and the retriever subcomplex. Component of the retriever complex, which is a heterotrimeric complex related to retromer cargo-selective complex (CSC) and essential for retromer-independent retrieval and recycling of numerous cargos such as integrin alpha-5/beta-1 (ITGA5:ITGB1). Component of the retromer cargo-selective complex (CSC). The CSC is believed to be the core functional component of retromer or respective retromer complex variants acting to prevent missorting of selected transmembrane cargo proteins into the lysosomal degradation pathway. The recruitment of the CSC to the endosomal membrane involves RAB7A and SNX3. The SNX-BAR retromer mediates retrograde transport of cargo proteins from endosomes to the trans-Golgi network (TGN) and is involved in endosome-to-plasma membrane transport for cargo protein recycling. The SNX3-retromer mediates the retrograde endosome-to-TGN transport of WLS distinct from the SNX-BAR retromer pathway. The SNX27-retromer is believed to be involved in endosome-to-plasma membrane trafficking and recycling of a broad spectrum of cargo proteins. The CSC seems to act as recruitment hub for other proteins, such as the WASH complex and TBC1D5. Required to regulate transcytosis of the polymeric immunoglobulin receptor (pIgR-pIgA). In the endosomes, retriever complex drives the retrieval and recycling of NxxY-motif-containing cargo proteins by coupling to SNX17, a cargo essential for the homeostatic maintenance of numerous cell surface proteins associated with processes that include cell migration, cell adhesion, nutrient supply and cell signaling. The recruitment of the retriever complex to the endosomal membrane involves CCC and WASH complexes. Involved in GLUT1 endosome-to-plasma membrane trafficking; the function is dependent of association with ANKRD27. The chain is Vacuolar protein sorting-associated protein 29 from Rattus norvegicus (Rat).